A 161-amino-acid chain; its full sequence is Endoribonuclease YbeY (161 aa).

Histidine 127, histidine 131, and histidine 137 together coordinate Zn(2+).

Belongs to the endoribonuclease YbeY family. It depends on Zn(2+) as a cofactor.

The protein localises to the cytoplasm. Its function is as follows. Single strand-specific metallo-endoribonuclease involved in late-stage 70S ribosome quality control and in maturation of the 3' terminus of the 16S rRNA. This is Endoribonuclease YbeY from Listeria monocytogenes serotype 4b (strain CLIP80459).